Here is a 997-residue protein sequence, read N- to C-terminus: Pro-apoptotic serine protease NMA111 (997 aa).

Residues 1-43 (MTISLSNIKKRDHSKISDGTSGESSLVKRKQLESATGDQEEEY) are disordered. The interval 83–273 (VVSIHFSQVA…LPLDRILRAL (191 aa)) is serine protease. Active-site charge relay system residues include His-121, Asp-152, and Ser-235. 2 PDZ domains span residues 300 to 378 (RRLG…QRGG) and 779 to 854 (EEWI…VRDG).

It belongs to the peptidase S1C family. Interacts with BIR1.

It is found in the nucleus. Functionally, nuclear serine protease which mediates apoptosis through proteolysis of the apoptotic inhibitor BIR1. This is Pro-apoptotic serine protease NMA111 (NMA111) from Saccharomyces cerevisiae (strain YJM789) (Baker's yeast).